We begin with the raw amino-acid sequence, 503 residues long: Transmembrane protein 184C (503 aa).

The next 7 membrane-spanning stretches (helical) occupy residues 17 to 37 (LLIL…IWEF), 48 to 68 (VWFI…CGIL), 83 to 103 (IIRI…ALKY), 115 to 135 (ECYE…YLTI), 212 to 232 (YLVI…LLFY), 254 to 274 (VVFV…VGVI), and 287 to 307 (AVAT…AAIA). Disordered stretches follow at residues 358 to 391 (PKKK…SPVG) and 479 to 503 (SPKP…STDS). Positions 373-388 (SSLLSASSQDSSKPSS) are enriched in low complexity. Positions 494–503 (PEGSDSSTDS) are enriched in polar residues.

The protein belongs to the TMEM184 family.

It localises to the membrane. Functionally, possible tumor suppressor which may play a role in cell growth. In Rattus norvegicus (Rat), this protein is Transmembrane protein 184C (Tmem184c).